The following is a 66-amino-acid chain: Large ribosomal subunit protein bL33c (66 aa).

Belongs to the bacterial ribosomal protein bL33 family.

It is found in the plastid. The chain is Large ribosomal subunit protein bL33c (rpl33) from Epifagus virginiana (Beechdrops).